The primary structure comprises 98 residues: NADH-ubiquinone oxidoreductase chain 4L (98 aa).

3 helical membrane-spanning segments follow: residues 1-21 (MNLIDLILIAIYVIGISGLIF), 26-46 (IINILIISELNLGTLGMLFVL), and 61-81 (LYILTFTAAESAIGLAIVVIL).

This sequence belongs to the complex I subunit 4L family.

The protein resides in the mitochondrion membrane. It carries out the reaction a ubiquinone + NADH + 5 H(+)(in) = a ubiquinol + NAD(+) + 4 H(+)(out). Core subunit of the mitochondrial membrane respiratory chain NADH dehydrogenase (Complex I) that is believed to belong to the minimal assembly required for catalysis. Complex I functions in the transfer of electrons from NADH to the respiratory chain. The immediate electron acceptor for the enzyme is believed to be ubiquinone. The chain is NADH-ubiquinone oxidoreductase chain 4L (nad4L) from Dictyostelium discoideum (Social amoeba).